Reading from the N-terminus, the 25-residue chain is SPbeta prophage-derived uncharacterized protein YotF (25 aa).

The chain is SPbeta prophage-derived uncharacterized protein YotF (yotF) from Bacillus subtilis (strain 168).